The primary structure comprises 601 residues: MEGADLLTAGVLFLFAAVAAVPLAARLGIGAVLGYLLAGIAIGPWGLGFISDVDEILHFSELGVVFLMFIIGLELNPSRLWQLRRSIFGVGAAQVLLSAAVLAGLLMLADFLWQAAVVGGIGLAMSSTAMALQLMREKGMNRSESGQLGFSVLLFQDLAVIPALALVPLLAGSADEHFDWFKVAMKVLAFAVMLIGGRYLLRPVFRFIAASGVREVFTAATLLLVLSAALFMDALGLSMALGTFIAGVLLAESEYRHELENAIDPFKGLLLGLFFISVGMSLNLGVLYTHLLWVAASVVILVVIKMLTLYLLARLYGIRSSERMQFASVLSQGGEFAFVLFSTASSQRLFQGDQMALLLVTVTLSMMTTPLLMKGIDKWLSRRLNGPEENDEKPWVEDDKPQVIVVGFGRFGQVIARLLMANKMRITVLERDIGAVNLMRKYGYKVYYGDATQVELLRSAGAEAAESIVITCNEPEDTMKLVALCQQHFPHLHILARARGRVEAHELLQAGVTQFSRETFSSALELGRKTLVSLGMHPHQAQRAQLHFRRLDMRMLRGLIPEHSDMVQISRAREARRELEEIFQREMQQERRQLDGWDEFE.

13 helical membrane-spanning segments follow: residues 4–24, 29–49, 55–75, 87–107, 111–131, 152–172, 177–197, 207–227, 230–250, 262–282, 284–304, 324–344, and 356–376; these read ADLLTAGVLFLFAAVAAVPLA, IGAVLGYLLAGIAIGPWGLGF, EILHFSELGVVFLMFIIGLEL, IFGVGAAQVLLSAAVLAGLLM, FLWQAAVVGGIGLAMSSTAMA, VLLFQDLAVIPALALVPLLAG, HFDWFKVAMKVLAFAVMLIGG, FIAASGVREVFTAATLLLVLS, LFMDALGLSMALGTFIAGVLL, AIDPFKGLLLGLFFISVGMSL, LGVLYTHLLWVAASVVILVVI, MQFASVLSQGGEFAFVLFSTA, and ALLLVTVTLSMMTTPLLMKGI. One can recognise an RCK N-terminal domain in the interval 400–519; the sequence is KPQVIVVGFG…AGVTQFSRET (120 aa).

It belongs to the monovalent cation:proton antiporter 2 (CPA2) transporter (TC 2.A.37) family. KefB subfamily. In terms of assembly, interacts with the regulatory subunit KefG.

The protein localises to the cell inner membrane. In terms of biological role, pore-forming subunit of a potassium efflux system that confers protection against electrophiles. Catalyzes K(+)/H(+) antiport. This is Glutathione-regulated potassium-efflux system protein KefB from Salmonella paratyphi A (strain ATCC 9150 / SARB42).